A 523-amino-acid chain; its full sequence is Tubulin-specific chaperone E (523 aa).

One can recognise a CAP-Gly domain in the interval 31 to 75 (GEVSGHMGSWLGIEWDDGLRGKHNGIVDGKRYFQTQTPTGGSFIR). LRR repeat units lie at residues 155-180 (LTHL…IAQQ), 181-204 (LPSL…QITE), 209-232 (FRQL…MHTA), 235-258 (WPNI…DRTK), 260-284 (FKQL…KLGN), 285-310 (LTTL…DSQE), and 315-337 (FVSL…AFNE).

It belongs to the TBCE family.

The protein localises to the cytoplasm. Tubulin-folding protein which is required for the development of the neuronal microtubule network. Essential for the development and function of neuromuscular synapses. Likely to promote microtubule formation by acting in the negative regulation of the microtubule-severing protein spas. This Drosophila melanogaster (Fruit fly) protein is Tubulin-specific chaperone E.